A 109-amino-acid polypeptide reads, in one-letter code: MNLDVPYYRLGNHEKVEYIPLKLALNDDTASEPQQFSEPVHKMPINDMVGYDNTTSNVSAGIIILISVVAFIALFLLLYVIYYFVILREQQQYSDSIDTDSPFVFNKFD.

The chain crosses the membrane as a helical span at residues 61–81 (GIIILISVVAFIALFLLLYVI).

The protein resides in the host membrane. The protein localises to the virion. In terms of biological role, plays an essential role in budded virus production and occlusion body formation. The chain is Protein AC78 (AC78) from Autographa californica nuclear polyhedrosis virus (AcMNPV).